The chain runs to 549 residues: Glucose-6-phosphate isomerase (549 aa).

Glutamate 355 functions as the Proton donor in the catalytic mechanism. Active-site residues include histidine 387 and lysine 515.

It belongs to the GPI family.

The protein localises to the cytoplasm. It carries out the reaction alpha-D-glucose 6-phosphate = beta-D-fructose 6-phosphate. Its pathway is carbohydrate biosynthesis; gluconeogenesis. It functions in the pathway carbohydrate degradation; glycolysis; D-glyceraldehyde 3-phosphate and glycerone phosphate from D-glucose: step 2/4. Its function is as follows. Catalyzes the reversible isomerization of glucose-6-phosphate to fructose-6-phosphate. In Histophilus somni (strain 2336) (Haemophilus somnus), this protein is Glucose-6-phosphate isomerase.